The sequence spans 104 residues: Large ribosomal subunit protein uL24 (104 aa).

Belongs to the universal ribosomal protein uL24 family. Part of the 50S ribosomal subunit.

Functionally, one of two assembly initiator proteins, it binds directly to the 5'-end of the 23S rRNA, where it nucleates assembly of the 50S subunit. Its function is as follows. One of the proteins that surrounds the polypeptide exit tunnel on the outside of the subunit. This is Large ribosomal subunit protein uL24 from Clostridium perfringens (strain ATCC 13124 / DSM 756 / JCM 1290 / NCIMB 6125 / NCTC 8237 / Type A).